The chain runs to 502 residues: ATP synthase subunit alpha (502 aa).

The interval 119–139 (GPIATTKSRPIESPAPGVMDR) is disordered. ATP is bound at residue 169 to 176 (GDRQTGKT).

Belongs to the ATPase alpha/beta chains family. F-type ATPases have 2 components, CF(1) - the catalytic core - and CF(0) - the membrane proton channel. CF(1) has five subunits: alpha(3), beta(3), gamma(1), delta(1), epsilon(1). CF(0) has three main subunits: a(1), b(2) and c(9-12). The alpha and beta chains form an alternating ring which encloses part of the gamma chain. CF(1) is attached to CF(0) by a central stalk formed by the gamma and epsilon chains, while a peripheral stalk is formed by the delta and b chains.

The protein resides in the cell membrane. It catalyses the reaction ATP + H2O + 4 H(+)(in) = ADP + phosphate + 5 H(+)(out). Its function is as follows. Produces ATP from ADP in the presence of a proton gradient across the membrane. The alpha chain is a regulatory subunit. This is ATP synthase subunit alpha from Alkalihalophilus pseudofirmus (strain ATCC BAA-2126 / JCM 17055 / OF4) (Bacillus pseudofirmus).